The chain runs to 198 residues: Phosphoheptose isomerase (198 aa).

Residues 40–198 (IVTALRSGRK…IEAALMQDLS (159 aa)) form the SIS domain. Residue 55-57 (NGG) participates in substrate binding. Zn(2+)-binding residues include His-64 and Glu-68. Substrate is bound by residues Glu-68, 97–98 (ND), 123–125 (STS), Ser-128, and Gln-175. Residues Gln-175 and His-183 each coordinate Zn(2+).

Belongs to the SIS family. GmhA subfamily. Homotetramer. Zn(2+) is required as a cofactor.

It is found in the cytoplasm. The catalysed reaction is 2 D-sedoheptulose 7-phosphate = D-glycero-alpha-D-manno-heptose 7-phosphate + D-glycero-beta-D-manno-heptose 7-phosphate. It participates in carbohydrate biosynthesis; D-glycero-D-manno-heptose 7-phosphate biosynthesis; D-glycero-alpha-D-manno-heptose 7-phosphate and D-glycero-beta-D-manno-heptose 7-phosphate from sedoheptulose 7-phosphate: step 1/1. Catalyzes the isomerization of sedoheptulose 7-phosphate in D-glycero-D-manno-heptose 7-phosphate. In Bradyrhizobium sp. (strain BTAi1 / ATCC BAA-1182), this protein is Phosphoheptose isomerase.